The primary structure comprises 898 residues: Translation initiation factor IF-2 (898 aa).

2 disordered regions span residues 51–70 (RKSHGAEDEGSGKKITLKRK) and 114–303 (LAAE…KQHG). Composition is skewed to basic and acidic residues over residues 114-171 (LAAE…EKSK) and 184-258 (PAKE…DDKG). In terms of domain architecture, tr-type G spans 398 to 567 (HRAPVVTIMG…LLQSELLELQ (170 aa)). The tract at residues 407-414 (GHVDHGKT) is G1. Residue 407 to 414 (GHVDHGKT) coordinates GTP. The tract at residues 432–436 (GITQH) is G2. A G3 region spans residues 453–456 (DTPG). Residues 453–457 (DTPGH) and 507–510 (NKID) contribute to the GTP site. Positions 507 to 510 (NKID) are G4. A G5 region spans residues 543–545 (SAH).

Belongs to the TRAFAC class translation factor GTPase superfamily. Classic translation factor GTPase family. IF-2 subfamily.

It is found in the cytoplasm. In terms of biological role, one of the essential components for the initiation of protein synthesis. Protects formylmethionyl-tRNA from spontaneous hydrolysis and promotes its binding to the 30S ribosomal subunits. Also involved in the hydrolysis of GTP during the formation of the 70S ribosomal complex. The protein is Translation initiation factor IF-2 of Alcanivorax borkumensis (strain ATCC 700651 / DSM 11573 / NCIMB 13689 / SK2).